Reading from the N-terminus, the 124-residue chain is Large ribosomal subunit protein bL19 (124 aa).

This sequence belongs to the bacterial ribosomal protein bL19 family.

In terms of biological role, this protein is located at the 30S-50S ribosomal subunit interface and may play a role in the structure and function of the aminoacyl-tRNA binding site. The chain is Large ribosomal subunit protein bL19 from Dinoroseobacter shibae (strain DSM 16493 / NCIMB 14021 / DFL 12).